Here is a 448-residue protein sequence, read N- to C-terminus: UDP-glycosyltransferase 79B5 (448 aa).

Residues threonine 261, 320–322 (LEQ), 337–345 (HCGFGSMWE), and 359–362 (LADQ) each bind UDP-alpha-D-glucose.

It belongs to the UDP-glycosyltransferase family.

The polypeptide is UDP-glycosyltransferase 79B5 (UGT79B5) (Arabidopsis thaliana (Mouse-ear cress)).